Consider the following 218-residue polypeptide: Small ribosomal subunit protein uS3 (218 aa).

One can recognise a KH type-2 domain in the interval 2–71 (SAPQRRLPVY…IGRKGAIVKE (70 aa)).

Belongs to the universal ribosomal protein uS3 family. Part of the 30S ribosomal subunit.

Functionally, binds the lower part of the 30S subunit head. This is Small ribosomal subunit protein uS3 from Pyrobaculum aerophilum (strain ATCC 51768 / DSM 7523 / JCM 9630 / CIP 104966 / NBRC 100827 / IM2).